The primary structure comprises 585 residues: Glycerol-3-phosphate dehydrogenase (585 aa).

Residue 37-65 (DVVVIGGGVVGSGCALDAATRGLKVALVE) participates in FAD binding.

The protein belongs to the FAD-dependent glycerol-3-phosphate dehydrogenase family. FAD is required as a cofactor.

It is found in the cytoplasm. The catalysed reaction is a quinone + sn-glycerol 3-phosphate = dihydroxyacetone phosphate + a quinol. This chain is Glycerol-3-phosphate dehydrogenase (glpD), found in Mycobacterium leprae (strain TN).